An 808-amino-acid polypeptide reads, in one-letter code: Quinoprotein glucose dehydrogenase (808 aa).

Residues Met1–Ala33 form the signal peptide. Helical transmembrane passes span Ile35–Leu54, Asn59–Trp76, Ile94–Ser108, and Gly123–Thr138. Asp470 acts as the Proton acceptor in catalysis. The segment at Val514–Lys545 is disordered. Positions Thr531–Thr541 are enriched in polar residues.

This sequence belongs to the bacterial PQQ dehydrogenase family. It depends on pyrroloquinoline quinone as a cofactor.

The protein localises to the cell inner membrane. It catalyses the reaction a ubiquinone + D-glucose = D-glucono-1,5-lactone + a ubiquinol. The chain is Quinoprotein glucose dehydrogenase (gdh) from Gluconobacter oxydans (strain 621H) (Gluconobacter suboxydans).